Reading from the N-terminus, the 215-residue chain is FGFR1 oncogene partner 2 homolog (215 aa).

A coiled-coil region spans residues 12-186 (AKELVERLRE…REILQITKIS (175 aa)). Residues 193–215 (EDASENSPHSAPVPNTDLILRKS) form a disordered region.

Belongs to the SIKE family.

Its subcellular location is the cytoplasm. This Xenopus laevis (African clawed frog) protein is FGFR1 oncogene partner 2 homolog (fgfr1op2).